The chain runs to 137 residues: Leaf-specific thionin DB4 (137 aa).

A signal peptide spans 1-28 (MAPSKSIKSVVICVLILGLVLEQVQVEG). Cystine bridges form between Cys-31-Cys-68, Cys-32-Cys-60, Cys-40-Cys-58, and Cys-44-Cys-54. A propeptide spans 75-137 (LNLLPESGEP…DGAVIQSVEA (63 aa)) (acidic domain).

This sequence belongs to the plant thionin (TC 1.C.44) family. 4 C-C subfamily.

The protein localises to the secreted. Functionally, thionins are small plant proteins which are toxic to animal cells. They seem to exert their toxic effect at the level of the cell membrane. Their precise function is not known. This is Leaf-specific thionin DB4 (THI1.3) from Hordeum vulgare (Barley).